Consider the following 204-residue polypeptide: Outer-membrane lipoprotein carrier protein (204 aa).

The first 21 residues, 1–21, serve as a signal peptide directing secretion; it reads MKKLLVACCVVSGMMSASVLA.

Belongs to the LolA family. In terms of assembly, monomer.

It is found in the periplasm. Its function is as follows. Participates in the translocation of lipoproteins from the inner membrane to the outer membrane. Only forms a complex with a lipoprotein if the residue after the N-terminal Cys is not an aspartate (The Asp acts as a targeting signal to indicate that the lipoprotein should stay in the inner membrane). The protein is Outer-membrane lipoprotein carrier protein of Edwardsiella ictaluri (strain 93-146).